We begin with the raw amino-acid sequence, 380 residues long: Cytochrome b (380 aa).

The next 4 helical transmembrane spans lie at 34 to 54 (FGSL…LLAM), 78 to 99 (WLIR…YLHI), 114 to 134 (WNTG…GYVL), and 179 to 199 (FFAL…VHLT). Heme b-binding residues include His-84 and His-98. Heme b-binding residues include His-183 and His-197. A ubiquinone is bound at residue His-202. A run of 4 helical transmembrane segments spans residues 227-247 (LKDI…ALFS), 289-309 (LGGV…PFLH), 321-341 (LSQL…WVGS), and 348-368 (FIII…ILFP).

The protein belongs to the cytochrome b family. The cytochrome bc1 complex contains 11 subunits: 3 respiratory subunits (MT-CYB, CYC1 and UQCRFS1), 2 core proteins (UQCRC1 and UQCRC2) and 6 low-molecular weight proteins (UQCRH/QCR6, UQCRB/QCR7, UQCRQ/QCR8, UQCR10/QCR9, UQCR11/QCR10 and a cleavage product of UQCRFS1). This cytochrome bc1 complex then forms a dimer. It depends on heme b as a cofactor.

It is found in the mitochondrion inner membrane. Its function is as follows. Component of the ubiquinol-cytochrome c reductase complex (complex III or cytochrome b-c1 complex) that is part of the mitochondrial respiratory chain. The b-c1 complex mediates electron transfer from ubiquinol to cytochrome c. Contributes to the generation of a proton gradient across the mitochondrial membrane that is then used for ATP synthesis. The sequence is that of Cytochrome b (MT-CYB) from Procellaria parkinsoni (Black petrel).